The following is a 127-amino-acid chain: Chondrosarcoma-associated gene 2/3 protein (127 aa).

The disordered stretch occupies residues 68–127 (MSRKPRASSPLSNNHPPTPKRRGSGRHPLNPGPEALSKFPRQPGREKGPIKEVPGTKGSP).

Weakly expressed in kidney. Expressed in various tumor cell lines including carcinomas, myeloid and lymphoid malignancies, melanomas and prostate cancer. Overexpressed in taxol-resistant breast cancer line MDA 435TR and the doxorubicin-resistant multiple myelanoma lines RPMI-8226/Dox40 and RPMI-8226/MDR10V.

Drug-resistance related protein, its expression is associated with the chemotherapy resistant and neoplastic phenotype. May also be linked to the malignant phenotype. The sequence is that of Chondrosarcoma-associated gene 2/3 protein (CSAG2) from Homo sapiens (Human).